The sequence spans 966 residues: Dynamin-like GTPase OPA1, mitochondrial (966 aa).

Residues 1–86 (MLRAGSVVTC…GGHGYQQHRT (86 aa)) constitute a mitochondrion transit peptide. The Mitochondrial matrix portion of the chain corresponds to 87 to 95 (FWVARLAAR). The helical transmembrane segment at 96-112 (LLKLRYILLGSAVGGGY) threads the bilayer. The Mitochondrial intermembrane portion of the chain corresponds to 113-776 (TAKKTYDEWK…SVIADMVGPD (664 aa)). Positions 189–217 (ESALRAPDVPPASAAMADSGDKQFKKSSD) are disordered. Over residues 207–217 (SGDKQFKKSSD) the composition is skewed to basic and acidic residues. Residues 213-259 (KKSSDKEKVDQLQEELLRTQLKYQRMLERLEKENKELRKVVLQKDDK) are a coiled coil. The region spanning 291-567 (QDHLPRVVVV…FWKMVRESVE (277 aa)) is the Dynamin-type G domain. The G1 motif stretch occupies residues 301–308 (GDQSAGKT). 6 residues coordinate GTP: S304, G306, K307, T308, S309, and G323. T308 is a binding site for Mg(2+). Residues 327–330 (MMTR) form a G2 motif region. Mg(2+) contacts are provided by T329 and D404. Residues 404–407 (DLPG) form a G3 motif region. The tract at residues 473-476 (TKVD) is G4 motif. The GTP site is built by K474, D476, and T509. Residues 507-510 (VVTG) form a G5 motif region. 2 stalk region regions span residues 595-842 (DRNE…IKDT) and 880-934 (CNDV…VQLI). The interval 742–862 (TDKPQWDAAI…QKALLHCNLC (121 aa)) is paddle region. Residues 777-787 (WKQRWMSWKNR) lie within the membrane without spanning it. The Mitochondrial intermembrane segment spans residues 788–966 (TPEQHTRNET…AFIEALHKEK (179 aa)). A disulfide bridge links C862 with C880. The stretch at 901–966 (RQQLTNTEVR…AFIEALHKEK (66 aa)) forms a coiled coil.

The protein belongs to the TRAFAC class dynamin-like GTPase superfamily. Dynamin/Fzo/YdjA family. As to quaternary structure, oligomeric complex consisting of membrane-bound and soluble forms of OPA1. Cleaved by OMA1 or YME1L downstream of the transmembrane region in response to different signals to generate soluble forms. Cleaved by OMA1 at position S1 following stress conditions, generating the short soluble form (Dynamin-like GTPase OPA1, short form; S-OPA1).

The protein resides in the mitochondrion inner membrane. The protein localises to the mitochondrion intermembrane space. It carries out the reaction GTP + H2O = GDP + phosphate + H(+). Its function is as follows. Dynamin-related GTPase that is essential for normal mitochondrial morphology by mediating fusion of the mitochondrial inner membranes, regulating cristae morphology and maintaining respiratory chain function. Exists in two forms: the transmembrane, long form (Dynamin-like GTPase OPA1, long form; L-OPA1), which is tethered to the inner mitochondrial membrane, and the short soluble form (Dynamin-like GTPase OPA1, short form; S-OPA1), which results from proteolytic cleavage and localizes in the intermembrane space. Both forms (L-OPA1 and S-OPA1) cooperate to catalyze the fusion of the mitochondrial inner membrane. The equilibrium between L-OPA1 and S-OPA1 is essential: excess levels of S-OPA1, produced by cleavage by OMA1 following loss of mitochondrial membrane potential, lead to an impaired equilibrium between L-OPA1 and S-OPA1, inhibiting mitochondrial fusion. The balance between L-OPA1 and S-OPA1 also influences cristae shape and morphology. Its role in mitochondrial morphology is required for mitochondrial genome maintenance. In terms of biological role, constitutes the transmembrane long form (L-OPA1) that plays a central role in mitochondrial inner membrane fusion and cristae morphology. L-OPA1 and the soluble short form (S-OPA1) form higher-order helical assemblies that coordinate the fusion of mitochondrial inner membranes. Inner membrane-anchored L-OPA1 molecules initiate membrane remodeling by recruiting soluble S-OPA1 to rapidly polymerize into a flexible cylindrical scaffold encaging the mitochondrial inner membrane. Once at the membrane surface, the formation of S-OPA1 helices induce bilayer curvature. OPA1 dimerization through the paddle region, which inserts into cardiolipin-containing membrane, promotes GTP hydrolysis and the helical assembly of a flexible OPA1 lattice on the membrane, which drives membrane curvature and mitochondrial fusion. Plays a role in the maintenance and remodeling of mitochondrial cristae, some invaginations of the mitochondrial inner membrane that provide an increase in the surface area. Probably acts by forming helical filaments at the inside of inner membrane tubes with the shape and dimensions of crista junctions. Functionally, constitutes the soluble short form (S-OPA1) generated by cleavage by OMA1, which plays a central role in mitochondrial inner membrane fusion and cristae morphology. The transmembrane long form (L-OPA1) and the S-OPA1 form higher-order helical assemblies that coordinate the fusion of mitochondrial inner membranes. Inner membrane-anchored L-OPA1 molecules initiate membrane remodeling by recruiting soluble S-OPA1 to rapidly polymerize into a flexible cylindrical scaffold encaging the mitochondrial inner membrane. Once at the membrane surface, the formation of S-OPA1 helices induce bilayer curvature. OPA1 dimerization through the paddle region, which inserts into cardiolipin-containing membrane, promotes GTP hydrolysis and the helical assembly of a flexible OPA1 lattice on the membrane, which drives membrane curvature and mitochondrial fusion. Excess levels of S-OPA1 produced by cleavage by OMA1 following stress conditions that induce loss of mitochondrial membrane potential, lead to an impaired equilibrium between L-OPA1 and S-OPA1, thereby inhibiting mitochondrial fusion. Plays a role in the maintenance and remodeling of mitochondrial cristae, some invaginations of the mitochondrial inner membrane that provide an increase in the surface area. Probably acts by forming helical filaments at the inside of inner membrane tubes with the shape and dimensions of crista junctions. This chain is Dynamin-like GTPase OPA1, mitochondrial, found in Danio rerio (Zebrafish).